The sequence spans 1350 residues: ABC transporter C family member 13 (1350 aa).

The 284-residue stretch at 107–390 (NKKSIFIVIL…LPEAIHNLLG (284 aa)) folds into the ABC transmembrane type-1 1 domain. The next 4 helical transmembrane spans lie at 111-131 (IFIVILCAIFSILSPLCLKYF), 143-163 (TFLTGLGYCVLLFVGTFSYTL), 215-235 (IGLFADFFWIGHLEIIIFPIQ), and 240-260 (LALLCWIVGWSGLVGFGVMII). A disordered region spans residues 462–481 (EKSEEEYETTTTTTDDNNNN). The span at 470–481 (TTTTTTDDNNNN) shows a compositional bias: low complexity. In terms of domain architecture, ABC transporter 1 spans 473–693 (TTTDDNNNNN…IDFESIMKTK (221 aa)). 505–512 (GVVGSGKT) is a binding site for ATP. The 288-residue stretch at 774–1061 (KHGSSTFFFI…FVELEVKMNS (288 aa)) folds into the ABC transmembrane type-1 2 domain. The next 6 helical transmembrane spans lie at 776 to 796 (GSSTFFFIATCVVYFFSQAIF), 816 to 836 (DSFYIFYYIIFIGLFIVTLVI), 887 to 907 (IDLLLYDLFSDVLYCGSTVVF), 909 to 929 (ICVMIYISPLISLPFLVLIIV), 1003 to 1023 (IGVRLEFISALVVFLTAFFSL), and 1029 to 1049 (GFSVLSVTTAIGMCTYLNWAV). The 235-residue stretch at 1103–1337 (IEFRDVEIRY…KNSKFSKLVK (235 aa)) folds into the ABC transporter 2 domain. 1137–1144 (GRTGAGKS) contributes to the ATP binding site.

This sequence belongs to the ABC transporter superfamily. ABCC family. Conjugate transporter (TC 3.A.1.208) subfamily.

The protein resides in the membrane. The protein is ABC transporter C family member 13 (abcC13) of Dictyostelium discoideum (Social amoeba).